The primary structure comprises 675 residues: Polyphosphate kinase (675 aa).

Asparagine 42 is a binding site for ATP. Mg(2+) is bound by residues arginine 372 and arginine 401. Catalysis depends on histidine 431, which acts as the Phosphohistidine intermediate. Residues tyrosine 464, arginine 558, and histidine 586 each contribute to the ATP site.

Belongs to the polyphosphate kinase 1 (PPK1) family. It depends on Mg(2+) as a cofactor. An intermediate of this reaction is the autophosphorylated ppk in which a phosphate is covalently linked to a histidine residue through a N-P bond.

It catalyses the reaction [phosphate](n) + ATP = [phosphate](n+1) + ADP. Catalyzes the reversible transfer of the terminal phosphate of ATP to form a long-chain polyphosphate (polyP). This chain is Polyphosphate kinase, found in Helicobacter pylori (strain J99 / ATCC 700824) (Campylobacter pylori J99).